The chain runs to 152 residues: Ribonuclease H (152 aa).

The region spanning 1–142 (MKEVTIYTDG…CDELARAAIA (142 aa)) is the RNase H type-1 domain. The Mg(2+) site is built by D9, E47, D69, and D134.

This sequence belongs to the RNase H family. As to quaternary structure, monomer. Mg(2+) is required as a cofactor.

Its subcellular location is the cytoplasm. The catalysed reaction is Endonucleolytic cleavage to 5'-phosphomonoester.. Its function is as follows. Endonuclease that specifically degrades the RNA of RNA-DNA hybrids. In Moorella thermoacetica (strain ATCC 39073 / JCM 9320), this protein is Ribonuclease H.